The following is a 155-amino-acid chain: Ribosomal RNA large subunit methyltransferase H (155 aa).

Residues G104 and 123–128 (LSRLTL) each bind S-adenosyl-L-methionine.

It belongs to the RNA methyltransferase RlmH family. In terms of assembly, homodimer.

Its subcellular location is the cytoplasm. It catalyses the reaction pseudouridine(1915) in 23S rRNA + S-adenosyl-L-methionine = N(3)-methylpseudouridine(1915) in 23S rRNA + S-adenosyl-L-homocysteine + H(+). Its function is as follows. Specifically methylates the pseudouridine at position 1915 (m3Psi1915) in 23S rRNA. In Marinomonas sp. (strain MWYL1), this protein is Ribosomal RNA large subunit methyltransferase H.